The sequence spans 338 residues: uncharacterized protein (338 aa).

Residues 1 to 20 form a disordered region; it reads MYNNNQNHHNNDNNMNKDEP. Basic and acidic residues predominate over residues 9-20; it reads HNNDNNMNKDEP. N-linked (GlcNAc...) asparagine glycosylation is found at N37, N83, N97, N105, N114, and N122. Residues 55-92 form a disordered region; the sequence is VNSGNNNNNNNNNNNNNNNNNNNNNNNNNDSIVINMDT. Positions 59-92 are enriched in low complexity; sequence NNNNNNNNNNNNNNNNNNNNNNNNNDSIVINMDT. Transmembrane regions (helical) follow at residues 148–168, 178–198, and 202–222; these read YKKFISSLSYITFIGAAIVLI, FHAYQSFYISMGVIGFQFLLI, and ILSIILWSLYLLFTIFMFLKV. 6 N-linked (GlcNAc...) asparagine glycosylation sites follow: N229, N240, N286, N302, N317, and N322. 2 disordered regions span residues 279-303 and 316-338; these read SNLNRNNNNSNNVNNNGHQRINSNS and LNSSGSNSSIYSDVQNDIGTNEE. Low complexity predominate over residues 280–294; that stretch reads NLNRNNNNSNNVNNN. Low complexity predominate over residues 316–327; the sequence is LNSSGSNSSIYS. Residues 328-338 show a composition bias toward polar residues; sequence DVQNDIGTNEE.

The protein localises to the membrane. This is an uncharacterized protein from Dictyostelium discoideum (Social amoeba).